A 568-amino-acid polypeptide reads, in one-letter code: Small ribosomal subunit protein bS1 (568 aa).

6 consecutive S1 motif domains span residues 39–100 (KTVV…LSRE), 118–184 (GEFV…VSRR), 205–273 (GMIL…LGIK), 290–360 (GKKM…LSIK), 377–447 (GTII…LGIK), and 464–533 (GTIV…LSVK).

Belongs to the bacterial ribosomal protein bS1 family.

Its function is as follows. Binds mRNA; thus facilitating recognition of the initiation point. It is needed to translate mRNA with a short Shine-Dalgarno (SD) purine-rich sequence. The protein is Small ribosomal subunit protein bS1 (rpsA) of Rickettsia typhi (strain ATCC VR-144 / Wilmington).